A 201-amino-acid polypeptide reads, in one-letter code: LexA repressor (201 aa).

Positions 28 to 48 form a DNA-binding region, H-T-H motif; the sequence is MRDIAAHLRISGTLGVSKHLT. Residues serine 120 and lysine 157 each act as for autocatalytic cleavage activity in the active site.

It belongs to the peptidase S24 family. As to quaternary structure, homodimer.

It carries out the reaction Hydrolysis of Ala-|-Gly bond in repressor LexA.. In terms of biological role, represses a number of genes involved in the response to DNA damage (SOS response), including recA and lexA. In the presence of single-stranded DNA, RecA interacts with LexA causing an autocatalytic cleavage which disrupts the DNA-binding part of LexA, leading to derepression of the SOS regulon and eventually DNA repair. This is LexA repressor from Geobacter metallireducens (strain ATCC 53774 / DSM 7210 / GS-15).